Consider the following 426-residue polypeptide: Phosphomethylpyrimidine synthase (426 aa).

Residues Asn-66, Met-95, Tyr-124, His-163, 185–187, 226–229, and Glu-265 contribute to the substrate site; these read SRG and DGLR. Residue His-269 participates in Zn(2+) binding. Substrate is bound at residue Tyr-292. His-333 is a Zn(2+) binding site. [4Fe-4S] cluster is bound by residues Cys-407, Cys-410, and Cys-414.

Belongs to the ThiC family. The cofactor is [4Fe-4S] cluster.

The catalysed reaction is 5-amino-1-(5-phospho-beta-D-ribosyl)imidazole + S-adenosyl-L-methionine = 4-amino-2-methyl-5-(phosphooxymethyl)pyrimidine + CO + 5'-deoxyadenosine + formate + L-methionine + 3 H(+). Its pathway is cofactor biosynthesis; thiamine diphosphate biosynthesis. Its function is as follows. Catalyzes the synthesis of the hydroxymethylpyrimidine phosphate (HMP-P) moiety of thiamine from aminoimidazole ribotide (AIR) in a radical S-adenosyl-L-methionine (SAM)-dependent reaction. The chain is Phosphomethylpyrimidine synthase from Thermococcus gammatolerans (strain DSM 15229 / JCM 11827 / EJ3).